The following is a 202-amino-acid chain: Methylthioribulose-1-phosphate dehydratase (202 aa).

Positions 93 and 95 each coordinate Zn(2+).

This sequence belongs to the aldolase class II family. MtnB subfamily. Zn(2+) serves as cofactor.

It carries out the reaction 5-(methylsulfanyl)-D-ribulose 1-phosphate = 5-methylsulfanyl-2,3-dioxopentyl phosphate + H2O. The protein operates within amino-acid biosynthesis; L-methionine biosynthesis via salvage pathway; L-methionine from S-methyl-5-thio-alpha-D-ribose 1-phosphate: step 2/6. Functionally, catalyzes the dehydration of methylthioribulose-1-phosphate (MTRu-1-P) into 2,3-diketo-5-methylthiopentyl-1-phosphate (DK-MTP-1-P). The polypeptide is Methylthioribulose-1-phosphate dehydratase (Klebsiella pneumoniae subsp. pneumoniae (strain ATCC 700721 / MGH 78578)).